The sequence spans 268 residues: Tryptophan synthase alpha chain (268 aa).

Active-site proton acceptor residues include Glu49 and Asp60.

It belongs to the TrpA family. Tetramer of two alpha and two beta chains.

It catalyses the reaction (1S,2R)-1-C-(indol-3-yl)glycerol 3-phosphate + L-serine = D-glyceraldehyde 3-phosphate + L-tryptophan + H2O. Its pathway is amino-acid biosynthesis; L-tryptophan biosynthesis; L-tryptophan from chorismate: step 5/5. Functionally, the alpha subunit is responsible for the aldol cleavage of indoleglycerol phosphate to indole and glyceraldehyde 3-phosphate. The polypeptide is Tryptophan synthase alpha chain (Haemophilus influenzae (strain PittEE)).